A 433-amino-acid polypeptide reads, in one-letter code: Legumain (433 aa).

The first 17 residues, 1–17 (MIWEFTVLLSLVLGTGA), serve as a signal peptide directing secretion. The propeptide occupies 18-25 (VPLEDPED). N-linked (GlcNAc...) asparagine glycosylation is present at N91. The active site involves H148. Residue N167 is glycosylated (N-linked (GlcNAc...) asparagine). C189 functions as the Nucleophile in the catalytic mechanism. 2 N-linked (GlcNAc...) asparagine glycosylation sites follow: N263 and N272. Residues 324–433 (DLQESRRLVQ…SMNKVCHGYY (110 aa)) constitute a propeptide that is removed on maturation. 2 disulfide bridges follow: C378-C412 and C390-C429.

Belongs to the peptidase C13 family. Homodimer before autocatalytic removal of the propeptide. Monomer after autocatalytic processing. May interact with integrins. In terms of processing, activated by autocatalytic processing at pH 4. Detected in kidney (at protein level).

It is found in the lysosome. The enzyme catalyses Hydrolysis of proteins and small molecule substrates at -Asn-|-Xaa- bonds.. In terms of biological role, has a strict specificity for hydrolysis of asparaginyl bonds. Can also cleave aspartyl bonds slowly, especially under acidic conditions. Involved in the processing of proteins for MHC class II antigen presentation in the lysosomal/endosomal system. Also involved in MHC class I antigen presentation in cross-presenting dendritic cells by mediating cleavage and maturation of Perforin-2 (MPEG1), thereby promoting antigen translocation in the cytosol. Required for normal lysosomal protein degradation in renal proximal tubules. Required for normal degradation of internalized EGFR. Plays a role in the regulation of cell proliferation via its role in EGFR degradation. The protein is Legumain (LGMN) of Bos taurus (Bovine).